The sequence spans 1401 residues: MISVGEIMERANHSLVRMRREGEDLTLEEKAEICSELELQQKYVDIASNIIGDLSSLPIAGKIAGTIAAAAMTATHVASGRLDIEQTLLGCSDLPFDQIKEVLENRFNEIDRKLDSHSAALEEITKLVEKSISVVEKTRKQMNKRFDEVMKSIQDAKVSPIISKINNFARYFDTEKERIRGLKLNDYILKLEEPNGILLHFKESRTPTDDSLQAPLFSIIEEGYAVPKSIDDELAFKVLYALLYGTQTYVSVMFFLLEQYSFLANHYYEKGYLEKYDEYFNSLNNVFLDFKSSLVGTGTSNNEGLLDRVLQVLMTVKNSEFLGLEKNGVDEMLNEKINLFNKIKEEIEGKQKMTLSETPENFAQISFDKDITTPIGDWRDGREVRYAVQYASETLFSKISHWSDPVSVREKACPTLRMPVDQTRRNVLVFRKFDSSKPQLVGEITPYLSNFIDIDRDLYNAASNPDSAVGFKEFTKLNYDGANIRATFDHGRTVFHAAAKSGNDKIMFGLTFLAKSTELNQPDKKGYTPIHVAADSGNAGIVNLLIQRGVSINSKTYHFLQTPLHLAAQRGFVTTFQRLMESPEININERDKDGFTPLHYAIRGGERILEAFLNQISIDVNAKSNTGLTPFHLAIIKNDWPVASTLLGSKKVDINAVDENNITALHYAAILGYLETTKQLINLKEINANVVSSPGLLSALHYAILYKHDDVASFLMRSSNVNVNLKALGGITPLHLAVIQGRKQILSLMFDIGVNIEQKTDEKYTPLHLAAMSKYPELIQILLDQGSNFEAKTNSGATPLHLATFKGKSQAALILLNNEVNWRDTDENGQMPIHGAAMTGLLDVAQAIISIDATVVDIEDKNSDTPLNLAAQNSHIDVIKYFIDQGADINTRNKKGLAPLLAFSKKGNLDMVKYLFDKNANVYIADNDGMNFFYYAVQNGHLNIVKYAMSEKDKFEWSNTDNNRRDECPNEECAISHFAVCDAVQFDRIEIVKYFVGTLGNFAICGPLHQAARYGHLDIVKYLVEEEFLSVDGSKTDTPLCYASENGHFTVVQYLVSNGAKVNHDCGNGMTAIDKAITKNHLQVVQFLAANGVDFRRKNSRGTTPFLTAVAENALHIAEYLIREKRQDININEQNVDKDTALHLAVYYKNLQMIKLLIKYGIDVTIRNAYDKTALDIAIDAKFSNIVEYLKTKSGKFRREYKSSYGERSLLQTNQISNFIDRKNIEHDHPLFINADNESSELFSKTASNIDVIGTLLLIDVLIRYFSKQGYISKESDSASDGITQAAALSITEKFEDVLNSLHNESAKEQVDLAEVHGKVYAALKSGRNSQIHQILCSSLNSISTLKPEDMEKLESVIMNSHSSVSLPEVTDSANEAYGETLHLFGESCLHSDGILTKKLM.

An N-terminal signal peptide occupies residues 1–20 (MISVGEIMERANHSLVRMRR). The tract at residues 17-20 (RMRR) is furin-like endopeptidase recognition region. The segment at 238-257 (VLYALLYGTQTYVSVMFFLL) is helix H8 is the probable transmembrane region of the tetrameric pore inserted in the target cell membrane. Cysteines 413 and 1066 form a disulfide. ANK repeat units follow at residues 458 to 489 (LYNA…ATFD), 490 to 521 (HGRT…ELNQ), 525 to 554 (KGYT…SINS), 559 to 589 (FLQT…NINE), 593 to 622 (DGFT…DVNA), 626 to 656 (TGLT…DINA), 660 to 690 (NNIT…NANV), 695 to 723 (GLLS…NVNV), 729 to 758 (GGIT…NIEQ), 762 to 791 (EKYT…NFEA), 795 to 824 (SGAT…NWRD), 828 to 857 (NGQM…TVVD), 862 to 891 (NSDT…DINT), 895 to 924 (KGLA…NVYI), 928 to 957 (DGMN…KFEW), 971 to 1003 (EECA…GNFA), 1004 to 1033 (ICGP…SVDG), 1035 to 1064 (KTDT…KVNH), 1068 to 1097 (NGMT…DFRR), 1101 to 1131 (RGTT…DINI), 1137 to 1166 (DKDT…DVTI), and 1170 to 1199 (YDKT…KFRR). The 4C4.1 epitope stretch occupies residues 1026–1032 (EEFLSVD). Residues 1196–1199 (KFRR) form a furin-like endopeptidase recognition region region. The propeptide occupies 1200–1401 (EYKSSYGERS…SDGILTKKLM (202 aa)).

This sequence belongs to the cationic peptide 01 (latrotoxin) family. 03 (alpha-latrotoxin) subfamily. In terms of assembly, homotetramer in membranes. In terms of processing, processed by furin-like proteases at both the N- and C-termini. In terms of tissue distribution, expressed in venom gland, cephalothorax, and abdomen tissues from both males and females.

The protein resides in the secreted. The protein localises to the target cell membrane. Presynaptic neurotoxin that causes massive release of neurotransmitters from vertebrate (but not invertebrate) nerve terminals and endocrine cells via a complex mechanism involving activation of receptor(s) and toxin insertion into the plasma membrane with subsequent pore formation. Binds to neurexin-1-alpha (NRXN1) in a calcium dependent manner, adhesion G protein-coupled receptor L1 (ADGRL1, also termed latrophilin-1 and calcium-independent receptor of latrotoxin (CIRL)), and receptor-type tyrosine-protein phosphatase S (PTPRS), also termed PTP sigma. NRXN1 and PTPRS are suggested to provide a platform for binding and subsequent pore formation events. In contrast, binding to ADGRL1 does not involve oligomerization and channel formation, but direct downstream stimulation of the synaptic fusion machinery. The sequence is that of Alpha-latrotoxin-Lt1a from Latrodectus tredecimguttatus (Mediterranean black widow spider).